We begin with the raw amino-acid sequence, 113 residues long: Cell cycle protein GpsB (113 aa).

The stretch at 32-70 forms a coiled coil; that stretch reads LDSVIKDYENFGKEIERMKNENDRLTDKVDELNKQVSAG.

This sequence belongs to the GpsB family. In terms of assembly, forms polymers through the coiled coil domains. Interacts with PBP1, MreC and EzrA.

Its subcellular location is the cytoplasm. Divisome component that associates with the complex late in its assembly, after the Z-ring is formed, and is dependent on DivIC and PBP2B for its recruitment to the divisome. Together with EzrA, is a key component of the system that regulates PBP1 localization during cell cycle progression. Its main role could be the removal of PBP1 from the cell pole after pole maturation is completed. Also contributes to the recruitment of PBP1 to the division complex. Not essential for septum formation. This Pediococcus pentosaceus (strain ATCC 25745 / CCUG 21536 / LMG 10740 / 183-1w) protein is Cell cycle protein GpsB.